Here is a 933-residue protein sequence, read N- to C-terminus: Protein inturned (933 aa).

The segment at 1-54 is disordered; it reads MASLPLCGSVRSPEGLPGDPSSQEDRQDYDPEDPVSGSGSYSPTSTDSNDLEPE. Polar residues predominate over residues 37 to 48; that stretch reads GSGSYSPTSTDS. The region spanning 186–264 is the PDZ domain; it reads LVGIIHQTKW…PMQVKLTFEN (79 aa). Ser675 is modified (phosphoserine). The segment at 703–742 is disordered; it reads LKTRKPSPSRSGGPDSGLEGEGVGLSPHTTESQGSHGSEE. Residues 710–719 are compositionally biased toward low complexity; sequence PSRSGGPDSG. Polar residues predominate over residues 729-738; that stretch reads PHTTESQGSH.

The protein belongs to the inturned family. Component of the CPLANE (ciliogenesis and planar polarity effectors) complex, composed of INTU, FUZ and WDPCP. Interacts with CPLANE1. Interacts with NPHP4 and DAAM1; INTU is mediating the interaction between NPHP4 and DAAM1.

Its subcellular location is the cytoplasm. It localises to the cell surface. It is found in the cytoskeleton. The protein resides in the cilium basal body. The protein localises to the microtubule organizing center. Its subcellular location is the centrosome. It localises to the centriole. In terms of biological role, plays a key role in ciliogenesis and embryonic development. Regulator of cilia formation by controlling the organization of the apical actin cytoskeleton and the positioning of the basal bodies at the apical cell surface, which in turn is essential for the normal orientation of elongating ciliary microtubules. Plays a key role in definition of cell polarity via its role in ciliogenesis but not via conversion extension. Has an indirect effect on hedgehog signaling. Proposed to function as core component of the CPLANE (ciliogenesis and planar polarity effectors) complex involved in the recruitment of peripheral IFT-A proteins to basal bodies. Required for recruitment of CPLANE2 to the mother centriole. Binds phosphatidylinositol 3-phosphate with highest affinity, followed by phosphatidylinositol 4-phosphate and phosphatidylinositol 5-phosphate. This Bos taurus (Bovine) protein is Protein inturned (INTU).